A 154-amino-acid polypeptide reads, in one-letter code: Putative F-box protein At2g11200 (154 aa).

The F-box domain maps to 5–51 (TTAMSDLPRDLEEEVLSRVQLASLRAVRTTCKKWNRRLSKYRFTKKY).

This is Putative F-box protein At2g11200 from Arabidopsis thaliana (Mouse-ear cress).